Here is a 556-residue protein sequence, read N- to C-terminus: Methyltransferase/ribosomally synthesized type II borosin cyclic peptide precursor pgiMA1 (556 aa).

Positions 1 to 250 (MSSASSDSNT…SCSTLYVPPL (250 aa)) are methyltransferase domain. Catalysis depends on residues Arg-74, Tyr-78, and Tyr-100. Tyr-100, His-102, Val-105, Gln-174, Gly-212, Ser-243, and Thr-244 together coordinate S-adenosyl-L-methionine. A clasp domain region spans residues 251 to 377 (THANKFSGNM…GAVFGVMKLR (127 aa)). The interval 378 to 386 (ASEVANEQG) is precursor leader. 10 positions are modified to N-methylaspartate: Asp-421, Asp-434, Asp-447, Asp-460, Asp-473, Asp-486, Asp-499, Asp-512, Asp-525, and Asp-538. Residues 543–556 (AVPVPDHVAGIPCM) constitute a propeptide that is removed on maturation.

This sequence in the N-terminal section; belongs to the precorrin methyltransferase family. As to quaternary structure, homodimer. PgiMA1 automethylates at Asp-421, Asp-434, Asp-447, Asp-460, Asp-473, Asp-486, Asp-499, Asp-512, Asp-525 and Asp-538 before being processed, probably by the M64 family peptidase found in the genes surrounding PgiMA1, to release methylated peptides which then undergos macrocyclization with the N-terminus of the modified core peptides. Peptide backbone alpha-N-methylations change the physicochemical properties of amide bonds to provide structural constraints and other favorable characteristics including biological membrane permeability to peptides.

It functions in the pathway secondary metabolite biosynthesis. Functionally, fusion protein of the methyltransferase pgiM1 and 12 type II borosin core peptides; part of the gene cluster that mediates the biosynthesis of a type II borosin, a highly methylated cyclic peptide with potent biological activities. Type II borosins derive from the C-terminus of the fusion protein, and it is the same protein that methylates its own C-terminus using S-adenosyl methionine (SAM). The C-terminus is subsequently cleaved off and macrocyclized by a prolyloligopeptidase to give the final product. The protein is Methyltransferase/ribosomally synthesized type II borosin cyclic peptide precursor pgiMA1 of Phlebiopsis gigantea (strain 11061_1 CR5-6) (White-rot fungus).